A 370-amino-acid chain; its full sequence is MKLMELTPWETPAVIDYKKTMEQFGVKPIVDVLGDLKEEHHFFRRNIILGHRDFERIVDAIKNNKEFAVVSGMMPSGKMHFGHKMVVDLLKFYQKYTDNINIPIADLEAYWARNMSFETTKELALNEYITNYIALGLDPEKINVYLQSKYQKVKDLALILSKRTNWSEMKAIYGFKGETNIGHVFAPIVQVADILHPQLDENLSPEPKPVVVPVGIDQDPHIRLTRDIANRAKEFKFIPPSSTYHRFMTGLLGGKMSSSKPETAIFLTDDEKTVKKKIFSAKTGGRETLEEHKKYGGVPEECVVYELFLYHLILDDKELAEIYQKCRSGELTCGKCKKMAYERVVEFLKDLKEKREQAKEIAVKILEGKY.

The 'HIGH' region motif lies at 75-83; sequence PSGKMHFGH. Positions 255–259 match the 'KMSKS' region motif; that stretch reads KMSSS.

Belongs to the class-I aminoacyl-tRNA synthetase family.

It is found in the cytoplasm. It catalyses the reaction tRNA(Trp) + L-tryptophan + ATP = L-tryptophyl-tRNA(Trp) + AMP + diphosphate + H(+). The protein is Tryptophan--tRNA ligase of Methanocaldococcus jannaschii (strain ATCC 43067 / DSM 2661 / JAL-1 / JCM 10045 / NBRC 100440) (Methanococcus jannaschii).